Here is a 189-residue protein sequence, read N- to C-terminus: Putative L,D-transpeptidase in ATP synthase subunits region ORF 5 (189 aa).

Residues 1–35 (MTDTLNRRAAMALGLASAAGAALATPALSQDAAPA) constitute a signal peptide (tat-type signal). Residues 59-189 (PMLVADTFSR…CPVGTRVRVI (131 aa)) form the L,D-TPase catalytic domain. Catalysis depends on H149, which acts as the Proton donor/acceptor. C165 serves as the catalytic Nucleophile.

Belongs to the YkuD family. In terms of processing, predicted to be exported by the Tat system. The position of the signal peptide cleavage has not been experimentally proven.

The protein operates within cell wall biogenesis; peptidoglycan biosynthesis. In Fuscovulum blasticum (Rhodobacter blasticus), this protein is Putative L,D-transpeptidase in ATP synthase subunits region ORF 5.